Here is a 248-residue protein sequence, read N- to C-terminus: Small ribosomal subunit protein uS3 (248 aa).

The 69-residue stretch at 39–107 (IRQMLLKQLK…EVFINIVEIR (69 aa)) folds into the KH type-2 domain. Residues 214 to 248 (AVDKRMTAESEGPSSGRPPRRDRDRDRDRDRDSAA) are disordered. A compositionally biased stretch (basic and acidic residues) spans 232 to 248 (PRRDRDRDRDRDRDSAA).

The protein belongs to the universal ribosomal protein uS3 family. Part of the 30S ribosomal subunit. Forms a tight complex with proteins S10 and S14.

In terms of biological role, binds the lower part of the 30S subunit head. Binds mRNA in the 70S ribosome, positioning it for translation. This is Small ribosomal subunit protein uS3 from Azorhizobium caulinodans (strain ATCC 43989 / DSM 5975 / JCM 20966 / LMG 6465 / NBRC 14845 / NCIMB 13405 / ORS 571).